The primary structure comprises 1383 residues: DNA-directed RNA polymerase subunit beta'' (1383 aa).

Cysteine 220, cysteine 289, cysteine 296, and cysteine 299 together coordinate Zn(2+).

The protein belongs to the RNA polymerase beta' chain family. RpoC2 subfamily. In plastids the minimal PEP RNA polymerase catalytic core is composed of four subunits: alpha, beta, beta', and beta''. When a (nuclear-encoded) sigma factor is associated with the core the holoenzyme is formed, which can initiate transcription. The cofactor is Zn(2+).

It localises to the plastid. The protein localises to the chloroplast. The catalysed reaction is RNA(n) + a ribonucleoside 5'-triphosphate = RNA(n+1) + diphosphate. Its function is as follows. DNA-dependent RNA polymerase catalyzes the transcription of DNA into RNA using the four ribonucleoside triphosphates as substrates. The polypeptide is DNA-directed RNA polymerase subunit beta'' (Oenothera argillicola (Appalachian evening primrose)).